A 146-amino-acid chain; its full sequence is Phospholipase A2 OS2 (146 aa).

The first 27 residues, 1–27 (MHPAHLLVLLAVCVSLLGASDIPPLPL), serve as a signal peptide directing secretion. Disulfide bonds link C38-C99, C54-C145, C56-C72, C71-C126, C78-C119, C88-C112, and C106-C117. Residues Y55, G57, and G59 each coordinate Ca(2+). Residue H75 is part of the active site. D76 serves as a coordination point for Ca(2+). D120 is a catalytic residue.

The protein belongs to the phospholipase A2 family. Group I subfamily. D49 sub-subfamily. Monomer. It depends on Ca(2+) as a cofactor. As to expression, expressed by the venom gland.

The protein resides in the secreted. The catalysed reaction is a 1,2-diacyl-sn-glycero-3-phosphocholine + H2O = a 1-acyl-sn-glycero-3-phosphocholine + a fatty acid + H(+). In terms of biological role, snake venom phospholipase A2 (PLA2) that shows high presynaptic neurotoxicity in vertebrata that is independent of catalytic activity, as well as local myotoxicity when intramuscularly injected into mice. Blocks acetylcholine release in Aplysia neurons, and potentiates pro-inflammatory cellular signaling. Potentiates glutamate excitoxicity when coinjected into brain of rats. May act by binding in a calcium-dependent fashion and with high affinity to a neuronal-type (N-type) PLA2 receptor, and with very high affinity to a muscle-type (M-type) PLA2 receptor. In vitro, shows a high-specific activity on E.coli membranes and is more efficient on the anionic phospholipid POPG than on the anionic phospholipid POPS or the zwitterionic phospholipid POPC. Exerts catalytically-independent anti-HIV (IC(50) is 35 nM) activity and catalytically-dependent antimalarial activity (IC(50) is 3.1 nM when tested on P.falciparum grown in serum that contains lipoproteins). PLA2 catalyzes the calcium-dependent hydrolysis of the 2-acyl groups in 3-sn-phosphoglycerides. The chain is Phospholipase A2 OS2 from Oxyuranus scutellatus scutellatus (Australian taipan).